A 509-amino-acid chain; its full sequence is ATP synthase subunit alpha (509 aa).

169–176 (GDRQTGKT) contacts ATP.

It belongs to the ATPase alpha/beta chains family. In terms of assembly, F-type ATPases have 2 components, CF(1) - the catalytic core - and CF(0) - the membrane proton channel. CF(1) has five subunits: alpha(3), beta(3), gamma(1), delta(1), epsilon(1). CF(0) has three main subunits: a(1), b(2) and c(9-12). The alpha and beta chains form an alternating ring which encloses part of the gamma chain. CF(1) is attached to CF(0) by a central stalk formed by the gamma and epsilon chains, while a peripheral stalk is formed by the delta and b chains.

The protein localises to the cell inner membrane. It catalyses the reaction ATP + H2O + 4 H(+)(in) = ADP + phosphate + 5 H(+)(out). In terms of biological role, produces ATP from ADP in the presence of a proton gradient across the membrane. The alpha chain is a regulatory subunit. In Methylorubrum populi (strain ATCC BAA-705 / NCIMB 13946 / BJ001) (Methylobacterium populi), this protein is ATP synthase subunit alpha.